We begin with the raw amino-acid sequence, 339 residues long: 5-dehydro-2-deoxygluconokinase (339 aa).

It belongs to the carbohydrate kinase PfkB family.

It catalyses the reaction 5-dehydro-2-deoxy-D-gluconate + ATP = 6-phospho-5-dehydro-2-deoxy-D-gluconate + ADP + H(+). It functions in the pathway polyol metabolism; myo-inositol degradation into acetyl-CoA; acetyl-CoA from myo-inositol: step 5/7. Catalyzes the phosphorylation of 5-dehydro-2-deoxy-D-gluconate (2-deoxy-5-keto-D-gluconate or DKG) to 6-phospho-5-dehydro-2-deoxy-D-gluconate (DKGP). The sequence is that of 5-dehydro-2-deoxygluconokinase from Clostridium botulinum (strain Alaska E43 / Type E3).